Here is a 400-residue protein sequence, read N- to C-terminus: Carbamoyl phosphate synthase small chain (400 aa).

Residues 1–199 (MSNETNANST…PYVIEAEGEA (199 aa)) form a CPSase region. 3 residues coordinate L-glutamine: serine 66, glycine 250, and glycine 252. Residues 200-395 (RHTVVAYDLG…VALMDEDSEN (196 aa)) form the Glutamine amidotransferase type-1 domain. Catalysis depends on cysteine 278, which acts as the Nucleophile. The L-glutamine site is built by phenylalanine 279, glutamine 282, asparagine 320, glycine 322, and phenylalanine 323. Catalysis depends on residues histidine 368 and glutamate 370.

This sequence belongs to the CarA family. Composed of two chains; the small (or glutamine) chain promotes the hydrolysis of glutamine to ammonia, which is used by the large (or ammonia) chain to synthesize carbamoyl phosphate. Tetramer of heterodimers (alpha,beta)4.

It catalyses the reaction hydrogencarbonate + L-glutamine + 2 ATP + H2O = carbamoyl phosphate + L-glutamate + 2 ADP + phosphate + 2 H(+). The enzyme catalyses L-glutamine + H2O = L-glutamate + NH4(+). The protein operates within amino-acid biosynthesis; L-arginine biosynthesis; carbamoyl phosphate from bicarbonate: step 1/1. It participates in pyrimidine metabolism; UMP biosynthesis via de novo pathway; (S)-dihydroorotate from bicarbonate: step 1/3. In terms of biological role, small subunit of the glutamine-dependent carbamoyl phosphate synthetase (CPSase). CPSase catalyzes the formation of carbamoyl phosphate from the ammonia moiety of glutamine, carbonate, and phosphate donated by ATP, constituting the first step of 2 biosynthetic pathways, one leading to arginine and/or urea and the other to pyrimidine nucleotides. The small subunit (glutamine amidotransferase) binds and cleaves glutamine to supply the large subunit with the substrate ammonia. The polypeptide is Carbamoyl phosphate synthase small chain (Corynebacterium efficiens (strain DSM 44549 / YS-314 / AJ 12310 / JCM 11189 / NBRC 100395)).